The sequence spans 255 residues: L-seryl-tRNA(Sec) kinase (255 aa).

7–14 is an ATP binding site; the sequence is GLPSVGKS.

This sequence belongs to the L-seryl-tRNA(Sec) kinase family.

The enzyme catalyses L-seryl-tRNA(Sec) + ATP = O-phospho-L-seryl-tRNA(Sec) + ADP. The protein operates within aminoacyl-tRNA biosynthesis; selenocysteinyl-tRNA(Sec) biosynthesis; selenocysteinyl-tRNA(Sec) from L-seryl-tRNA(Sec) (archaeal/eukaryal route): step 1/2. Specifically phosphorylates seryl-tRNA(Sec) to O-phosphoseryl-tRNA(Sec), an activated intermediate for selenocysteine biosynthesis. The protein is L-seryl-tRNA(Sec) kinase (pstK) of Methanococcus maripaludis (strain DSM 14266 / JCM 13030 / NBRC 101832 / S2 / LL).